Consider the following 489-residue polypeptide: Virion host shutoff protein (489 aa).

Disordered regions lie at residues 110–135 (EEAS…AFSN), 142–161 (SLAS…PSAA), 285–316 (RSQT…GGTE), and 333–363 (YEDD…ILTP). Residues 124-134 (ITDSRPSSAFS) show a composition bias toward polar residues.

It belongs to the herpesviridae VHS protein family. As to quaternary structure, interacts with human EIF4H, EIF4A1 and EIF4A2; interaction with eIF4AI and EIF4A2 presumably allows Vhs protein to associate with the eIF4F cap-binding complex.

It is found in the virion. Minor structural protein that acts as an endoribonuclease during lytic infection. Degrades host mRNAs in the cytoplasm by cutting them at preferred sites, including some in regions of translation initiation. Together with inhibition of host splicing by ICP27, contributes to an overall decrease in host protein synthesis. Also, after the onset of viral transcription, accelerates the turnover of viral mRNA, thereby facilitating the sequential expression of different classes of viral genes. Binds translation initiation factors eIF4H, eIF4AI, and eIF4AII, thereby may interact directly with the translation initiation complex and thus digest specifically mRNAs. Also impedes antigen presentation by major histocompatibility complex class I and class II molecules, inhibits secretion of cytokines that would otherwise recruit lymphocytes and neutrophils cells to the site of infection and blocks the activation of dendritic cells. Impedes the alpha/beta interferon-mediated response to infection by evading the cGAS/ STING-mediated DNA-sensing pathway and degrading CGAS via its RNase activity. This chain is Virion host shutoff protein (UL41), found in Human herpesvirus 1 (strain KOS) (HHV-1).